Reading from the N-terminus, the 315-residue chain is Putative methyltransferase SPBC8D2.16c (315 aa).

It belongs to the class IV-like SAM-binding methyltransferase superfamily.

Its subcellular location is the cytoplasm. It localises to the nucleus. The chain is Putative methyltransferase SPBC8D2.16c from Schizosaccharomyces pombe (strain 972 / ATCC 24843) (Fission yeast).